Consider the following 449-residue polypeptide: HSPB1-associated protein 1 homolog (449 aa).

One can recognise a JmjC domain in the interval 102 to 266; that stretch reads WAYADYKYIA…DEARVAEALT (165 aa). Basic and acidic residues predominate over residues 385-395; it reads DQDKLRSDNKL. Positions 385–416 are disordered; it reads DQDKLRSDNKLGQRSGQSVLQDTENPGGSGEM. The segment covering 396-410 has biased composition (polar residues); sequence GQRSGQSVLQDTENP.

It is found in the cytoplasm. In terms of biological role, may play a role in cellular stress response. In Danio rerio (Zebrafish), this protein is HSPB1-associated protein 1 homolog (hspbap1).